Reading from the N-terminus, the 661-residue chain is MVEHVPFKLKSEFEPQGDQPQAIQKIVDGVNERKRHQTLLGATGTGKTFTMSNVIKEVGKPTLIIAHNKTLAGQLYSEFKEFFPENRVEYFVSYYDYYQPEAYVPSTDTFIEKDASINDEIDQLRHSATSSLFERDDVIIIASVSCIYGLGNPEEYKNLVVSVRVGMEMERSELLRKLVDVQYSRNDIDFQRGTFRVRGDVVEIFPASREEMCIRVEFFGDEIDRIREVNYLTGEVIREREHFTIFPASHFVTREEKMKVAIERIEKELEERLKELRDENKLLEAQRLEQRTNYDLEMMREMGFCSGIENYSVHLTLRPLGSTPYTLLDYFGDDWLVMIDESHVTLPQIRGMYNGDRARKQVLIDHGFRLPSALDNRPLKFEEFEEKTKQLVYVSATPGPYELEHTDEMVEQIIRPTGLLDPKIDVRPTENQIDDLLSEIQDRVDKDERVLVTTLTKKMSEDLTTYMKEAGIKVNYLHSEIKTLERIEIIRDLRMGTYDAIVGINLLREGIDIPEVSLVVILDADKEGFLRSDRSLIQTIGRAARNDKGEVIMYADKITDSMQYAIDETQRRREIQIAHNKEHGITPKTINKKIHDVISATVESDETNQQQQTELPKKMTKKERQKTIENIEKEMKKAAKDLDFEKATELRDMLFELKAEG.

The Helicase ATP-binding domain maps to 28 to 414; that stretch reads DGVNERKRHQ…HTDEMVEQII (387 aa). 41 to 48 contacts ATP; it reads GATGTGKT. Residues 94–117 carry the Beta-hairpin motif; the sequence is YYDYYQPEAYVPSTDTFIEKDASI. The region spanning 432–598 is the Helicase C-terminal domain; the sequence is QIDDLLSEIQ…TINKKIHDVI (167 aa). The interval 603–624 is disordered; that stretch reads ESDETNQQQQTELPKKMTKKER. A UVR domain is found at 625–660; sequence QKTIENIEKEMKKAAKDLDFEKATELRDMLFELKAE.

It belongs to the UvrB family. In terms of assembly, forms a heterotetramer with UvrA during the search for lesions. Interacts with UvrC in an incision complex.

The protein resides in the cytoplasm. In terms of biological role, the UvrABC repair system catalyzes the recognition and processing of DNA lesions. A damage recognition complex composed of 2 UvrA and 2 UvrB subunits scans DNA for abnormalities. Upon binding of the UvrA(2)B(2) complex to a putative damaged site, the DNA wraps around one UvrB monomer. DNA wrap is dependent on ATP binding by UvrB and probably causes local melting of the DNA helix, facilitating insertion of UvrB beta-hairpin between the DNA strands. Then UvrB probes one DNA strand for the presence of a lesion. If a lesion is found the UvrA subunits dissociate and the UvrB-DNA preincision complex is formed. This complex is subsequently bound by UvrC and the second UvrB is released. If no lesion is found, the DNA wraps around the other UvrB subunit that will check the other stand for damage. This chain is UvrABC system protein B, found in Staphylococcus epidermidis (strain ATCC 12228 / FDA PCI 1200).